The primary structure comprises 104 residues: Cytochrome c6 (104 aa).

The N-terminal stretch at 1–20 (MKSLLTFILTTIFCIQQVWA) is a signal peptide. Residues Cys-34, Cys-37, His-38, and Met-78 each contribute to the heme c site.

This sequence belongs to the cytochrome c family. PetJ subfamily. Monomer. In terms of processing, binds 1 heme c group covalently per subunit.

The protein localises to the plastid. It localises to the chloroplast thylakoid lumen. Its function is as follows. Functions as an electron carrier between membrane-bound cytochrome b6-f and photosystem I in oxygenic photosynthesis. The protein is Cytochrome c6 of Cyanidioschyzon merolae (strain NIES-3377 / 10D) (Unicellular red alga).